The primary structure comprises 504 residues: Occludin (504 aa).

The Cytoplasmic segment spans residues 1 to 57 (MFSKKSYDGPPAGYGPPTGYGAPTADYGYGSPPPGSYYVDDAPQLFYKWTSPPGAVR). Positions 51 to 253 (SPPGAVRGLQ…ICFFAQKTRS (203 aa)) constitute an MARVEL domain. Residues 58–80 (GLQAGVLVLCIAIFACVASTLAW) form a helical membrane-spanning segment. The Extracellular segment spans residues 81 to 123 (DYGYGLGGAYGTGLGGFYGSNYYGSGLSYSYGYGGYYGGVNQR). The helical transmembrane segment at 124 to 148 (TANGFMIAMAVLCFLAQLGLLVAAL) threads the bilayer. At 149 to 158 (SKSGATRSRR) the chain is on the cytoplasmic side. Residues 159–183 (FYLAVLVLSAVLAFVMLIASIVYIM) traverse the membrane as a helical segment. The Extracellular portion of the chain corresponds to 184–227 (GVNPQAQMSSGYYYSPLLAMCSQAYGSTYLNQYIYHYCTVDPQE). A disulfide bond links C204 and C221. Residues 228-249 (AVAAVCGFLIVILLCLICFFAQ) form a helical membrane-spanning segment. The Cytoplasmic portion of the chain corresponds to 250-504 (KTRSKIWRYG…MVSAYDKVRG (255 aa)). A disordered region spans residues 324 to 396 (PSGTYSSRGD…VESSDERDQE (73 aa)). Residues 361–370 (PARRGRRRRR) are compositionally biased toward basic residues. Phosphotyrosine occurs at positions 379 and 383. The tract at residues 379–385 (YETDYTT) is interaction with TJP1. The OCEL domain maps to 396-504 (EQWASLYPPI…MVSAYDKVRG (109 aa)). Positions 412-471 (QRYKQEFDTDLKRYKQLCAEMDSINDRLNQLSRRLDSITEDSPQYQDVAEEYNQLKDLKR) form a coiled coil.

The protein belongs to the ELL/occludin family. Interacts with TJP1 and TJP3. Phosphorylated. Localized at tight junctions of both epithelial and endothelial cells. Highly expressed in lung and liver. Expressed at a lower level in brain.

The protein resides in the cell membrane. Its subcellular location is the cell junction. The protein localises to the tight junction. Functionally, may play a role in the formation and regulation of the tight junction (TJ) paracellular permeability barrier. Interacts with ZO-1. This Gallus gallus (Chicken) protein is Occludin (OCLN).